The following is a 342-amino-acid chain: N-acetyl-gamma-glutamyl-phosphate reductase (342 aa).

Cys-156 is a catalytic residue.

Belongs to the NAGSA dehydrogenase family. Type 1 subfamily.

Its subcellular location is the cytoplasm. The catalysed reaction is N-acetyl-L-glutamate 5-semialdehyde + phosphate + NADP(+) = N-acetyl-L-glutamyl 5-phosphate + NADPH + H(+). It participates in amino-acid biosynthesis; L-arginine biosynthesis; N(2)-acetyl-L-ornithine from L-glutamate: step 3/4. Catalyzes the NADPH-dependent reduction of N-acetyl-5-glutamyl phosphate to yield N-acetyl-L-glutamate 5-semialdehyde. This chain is N-acetyl-gamma-glutamyl-phosphate reductase, found in Pseudoalteromonas atlantica (strain T6c / ATCC BAA-1087).